A 325-amino-acid polypeptide reads, in one-letter code: uncharacterized protein (325 aa).

The N-terminal stretch at 1–26 is a signal peptide; sequence MQGRVAGSCAPLGLLLVCLHLPGLFA. Residues 41–60 are compositionally biased toward polar residues; sequence GTNLPQLGQPSSTGPSNSEH. Disordered regions lie at residues 41 to 110 and 147 to 189; these read GTNL…MDSW and GSGP…AGGK. The span at 147–157 shows a compositional bias: low complexity; sequence GSGPLPGESSP.

In terms of assembly, binds to numerous extracellular matrix proteins. As to expression, expressed in skin and tonsils.

It localises to the secreted. The protein resides in the extracellular space. The protein localises to the extracellular matrix. This is an uncharacterized protein from Homo sapiens (Human).